The chain runs to 154 residues: Bacterial ferritin (154 aa).

The Ferritin-like diiron domain maps to 1-145; it reads MQGNQAVVDY…QQLRLIELIG (145 aa). Residues Glu-18, Glu-51, His-54, Glu-93, Glu-127, and His-130 each contribute to the Fe cation site.

Belongs to the bacterioferritin family. As to quaternary structure, heterooligomer of 24 subunits, arranged as 12 dimers, that are packed together to form an approximately spherical molecule with a central cavity, in which large amounts of iron can be deposited.

It carries out the reaction 4 Fe(2+) + O2 + 4 H(+) = 4 Fe(3+) + 2 H2O. The catalysed reaction is Fe(2+)(in) = Fe(2+)(out). Functionally, iron-storage protein, whose ferroxidase center binds Fe(2+), oxidizes it using dioxygen to Fe(3+), and participates in the subsequent Fe(3+) oxide mineral core formation within the central cavity of the BFR protein shell. The sequence is that of Bacterial ferritin (bfrA) from Neisseria meningitidis serogroup A / serotype 4A (strain DSM 15465 / Z2491).